A 78-amino-acid chain; its full sequence is Sec-independent protein translocase protein TatA (78 aa).

A helical transmembrane segment spans residues 1–21; it reads MGSLSIWHWLIVLLIVALVFG. 2 stretches are compositionally biased toward basic and acidic residues: residues 39 to 57 and 65 to 78; these read FKEGMKDGETPEGQQRDQL and VDAKEKAPHSGDSR. The tract at residues 39–78 is disordered; that stretch reads FKEGMKDGETPEGQQRDQLSRTNTVDVDAKEKAPHSGDSR.

This sequence belongs to the TatA/E family. As to quaternary structure, the Tat system comprises two distinct complexes: a TatABC complex, containing multiple copies of TatA, TatB and TatC subunits, and a separate TatA complex, containing only TatA subunits. Substrates initially bind to the TatABC complex, which probably triggers association of the separate TatA complex to form the active translocon.

The protein localises to the cell inner membrane. Its function is as follows. Part of the twin-arginine translocation (Tat) system that transports large folded proteins containing a characteristic twin-arginine motif in their signal peptide across membranes. TatA could form the protein-conducting channel of the Tat system. The polypeptide is Sec-independent protein translocase protein TatA (Paraburkholderia phymatum (strain DSM 17167 / CIP 108236 / LMG 21445 / STM815) (Burkholderia phymatum)).